We begin with the raw amino-acid sequence, 107 residues long: Thioredoxin (107 aa).

Residues 2–107 form the Thioredoxin domain; that stretch reads SVEAVVKQVD…GIRELIQANA (106 aa). Active-site nucleophile residues include cysteine 34 and cysteine 37. A disulfide bond links cysteine 34 and cysteine 37.

The protein belongs to the thioredoxin family.

Participates in various redox reactions through the reversible oxidation of its active center dithiol to a disulfide and catalyzes dithiol-disulfide exchange reactions. This Echinococcus granulosus (Hydatid tapeworm) protein is Thioredoxin (TRX).